The chain runs to 357 residues: Snake venom metalloproteinase H4 (357 aa).

An N-terminal signal peptide occupies residues 1–6 (FPYQGS). Positions 7 to 176 (SIMLESGKVN…KKASQLIVST (170 aa)) are excised as a propeptide. The Peptidase M12B domain maps to 180 to 357 (RYMEIVIVVD…EVIKYFLDSK (178 aa)). Residue His316 coordinates Zn(2+). Glu317 is a catalytic residue. Residues His320 and His326 each contribute to the Zn(2+) site. The cysteines at positions 333 and 339 are disulfide-linked.

It belongs to the venom metalloproteinase (M12B) family. P-I subfamily. In terms of assembly, monomer. Requires Zn(2+) as cofactor. As to expression, expressed by the venom gland.

Its subcellular location is the secreted. Functionally, snake venom metalloproteinase that impairs hemostasis in the envenomed animal. This Deinagkistrodon acutus (Hundred-pace snake) protein is Snake venom metalloproteinase H4.